Here is a 476-residue protein sequence, read N- to C-terminus: Proline--tRNA ligase (476 aa).

This sequence belongs to the class-II aminoacyl-tRNA synthetase family. ProS type 3 subfamily. Homodimer.

It localises to the cytoplasm. The enzyme catalyses tRNA(Pro) + L-proline + ATP = L-prolyl-tRNA(Pro) + AMP + diphosphate. Its function is as follows. Catalyzes the attachment of proline to tRNA(Pro) in a two-step reaction: proline is first activated by ATP to form Pro-AMP and then transferred to the acceptor end of tRNA(Pro). The chain is Proline--tRNA ligase from Mycoplasma mobile (strain ATCC 43663 / 163K / NCTC 11711) (Mesomycoplasma mobile).